The primary structure comprises 944 residues: MVGLVPAGSAWGGRALAVLGVTLLVALARGLLPFFLGGRDLLWGQSGEASVLGVVEESRRVVDGAIQHTVRRDLSKRGLPSPSQLLSFSKLPEPTSRAVSRAAEIMEASVQAVRTRVYGKLGRSWPLTDTLPEAVLDTIANASGCRPHMLPPRCPDTCLARKYRLITGACNNRDHPRWGASNTALARWLPPAYEDGISEPRGWNPHVLYSGFPLPPVREVTRQVIRVPNEAVTEDDQYSDLLTVWGQYIDHDVAFTPQSASGAAFGAGADCQLTCENRSPCFPIQLPPDASGPACLPFSRSSAACGTGIQGAFFGNLSSANPRQQMNGLTSFLDASTVYGSSPALEKQLRNWTSAEGLLRVNTRHWDAGRAHLPFMRPPAPLACVPEPGTRGTAGAPCFLAGDSRASEVPTLAALHTLWLREHNRLASALKALNAHWSADTAYQEARKVVGALHQIITLRDYVPKVLGPEAFQQHVGPYEGYDPTMDPTVSNVFSTAAFRLGHATVHPLVRRLDARFQEHPGLPPLGLQDAFFPWRLLKEGGLDPLLRGLLASPAKLPVQEQLMNEELTERLFVLGSSGSLDLASINLQRGRDHGLPGYNAWREFCGLGRLHTRAELRSAVANATLAGRIMDLYGHPDNIDVWLGGLAEPLLPRARTGPLFACLIGRQMKALRDGDRFWWESSGVFTDEQRRELARHSLSRVICDNTGLPSVPADAFQVSRFPQDFEPCENIPGLNLDVWREALPQGDACGLPDSLDNGDVVLCGEAGRRVLVFSCRHGFKLQGPEQVACSPRGGAVRAPVCRDINECEDASHPPCHGSARCRNTKGGFRCECTDPAVLGEDGTTCVDSGRLPKASLVSIALGIVLVVGLAGLTWTLVCRWAHAGRKASLSIAELGGRGAPPPGRGAGQDGASGSLVPPLGPQGRTRAVDPTSSRSHVAQGSPA.

The N-terminal stretch at 1–30 (MVGLVPAGSAWGGRALAVLGVTLLVALARG) is a signal peptide. Residues 31–858 (LLPFFLGGRD…SGRLPKASLV (828 aa)) are Extracellular-facing. A glycan (N-linked (GlcNAc...) asparagine) is linked at asparagine 141. The cysteines at positions 154 and 170 are disulfide-linked. Aspartate 250 contacts heme b. The Proton acceptor role is filled by histidine 251. Aspartate 252 lines the Ca(2+) pocket. 2 disulfide bridges follow: cysteine 271–cysteine 281 and cysteine 275–cysteine 295. An N-linked (GlcNAc...) asparagine glycan is attached at asparagine 316. Threonine 330, phenylalanine 332, aspartate 334, and serine 336 together coordinate Ca(2+). Asparagine 351 carries N-linked (GlcNAc...) asparagine glycosylation. Residues glutamate 408 and histidine 503 each coordinate heme b. 7 disulfides stabilise this stretch: cysteine 606-cysteine 663, cysteine 704-cysteine 729, cysteine 750-cysteine 790, cysteine 776-cysteine 802, cysteine 808-cysteine 822, cysteine 816-cysteine 831, and cysteine 833-cysteine 846. Asparagine 623 carries an N-linked (GlcNAc...) asparagine glycan. Positions 748–804 (DACGLPDSLDNGDVVLCGEAGRRVLVFSCRHGFKLQGPEQVACSPRGGAVRAPVCRD) constitute a Sushi domain. Residues 804 to 847 (DINECEDASHPPCHGSARCRNTKGGFRCECTDPAVLGEDGTTCV) form the EGF-like; calcium-binding domain. Residues 859 to 879 (SIALGIVLVVGLAGLTWTLVC) traverse the membrane as a helical segment. Topologically, residues 880 to 944 (RWAHAGRKAS…RSHVAQGSPA (65 aa)) are cytoplasmic. The interval 895–944 (LGGRGAPPPGRGAGQDGASGSLVPPLGPQGRTRAVDPTSSRSHVAQGSPA) is disordered. Over residues 931–944 (PTSSRSHVAQGSPA) the composition is skewed to polar residues.

The protein belongs to the peroxidase family. XPO subfamily. As to quaternary structure, interacts with DUOX1, DUOX2 and CYBA. Requires Ca(2+) as cofactor. The cofactor is heme b. Post-translationally, heme is covalently bound through a H(2)O(2)-dependent autocatalytic process. Heme insertion is important for the delivery of protein at the cell surface. In terms of processing, cleaved in its N-terminal part.

Its subcellular location is the membrane. The catalysed reaction is 2 iodide + H2O2 + 2 H(+) = diiodine + 2 H2O. It carries out the reaction [thyroglobulin]-L-tyrosine + iodide + H2O2 + H(+) = [thyroglobulin]-3-iodo-L-tyrosine + 2 H2O. It catalyses the reaction [thyroglobulin]-3-iodo-L-tyrosine + iodide + H2O2 + H(+) = [thyroglobulin]-3,5-diiodo-L-tyrosine + 2 H2O. The enzyme catalyses 2 [thyroglobulin]-3,5-diiodo-L-tyrosine + H2O2 = [thyroglobulin]-L-thyroxine + [thyroglobulin]-dehydroalanine + 2 H2O. The catalysed reaction is [thyroglobulin]-3-iodo-L-tyrosine + [thyroglobulin]-3,5-diiodo-L-tyrosine + H2O2 = [thyroglobulin]-3,3',5-triiodo-L-thyronine + [thyroglobulin]-dehydroalanine + 2 H2O. It participates in hormone biosynthesis; thyroid hormone biosynthesis. Iodination and coupling of the hormonogenic tyrosines in thyroglobulin to yield the thyroid hormones T(3) and T(4). The protein is Thyroid peroxidase (TPO) of Canis lupus familiaris (Dog).